The primary structure comprises 274 residues: 3-methyl-2-oxobutanoate hydroxymethyltransferase (274 aa).

Mg(2+)-binding residues include aspartate 44 and aspartate 83. Residues 44–45 (DS), aspartate 83, and lysine 113 each bind 3-methyl-2-oxobutanoate. Glutamate 115 contributes to the Mg(2+) binding site. The active-site Proton acceptor is glutamate 182.

This sequence belongs to the PanB family. As to quaternary structure, homodecamer; pentamer of dimers. Requires Mg(2+) as cofactor.

It is found in the cytoplasm. The enzyme catalyses 3-methyl-2-oxobutanoate + (6R)-5,10-methylene-5,6,7,8-tetrahydrofolate + H2O = 2-dehydropantoate + (6S)-5,6,7,8-tetrahydrofolate. It participates in cofactor biosynthesis; (R)-pantothenate biosynthesis; (R)-pantoate from 3-methyl-2-oxobutanoate: step 1/2. Catalyzes the reversible reaction in which hydroxymethyl group from 5,10-methylenetetrahydrofolate is transferred onto alpha-ketoisovalerate to form ketopantoate. In Campylobacter jejuni subsp. jejuni serotype O:6 (strain 81116 / NCTC 11828), this protein is 3-methyl-2-oxobutanoate hydroxymethyltransferase.